The sequence spans 169 residues: Peptide methionine sulfoxide reductase MsrA (169 aa).

The active site involves C10.

The protein belongs to the MsrA Met sulfoxide reductase family.

It catalyses the reaction L-methionyl-[protein] + [thioredoxin]-disulfide + H2O = L-methionyl-(S)-S-oxide-[protein] + [thioredoxin]-dithiol. The catalysed reaction is [thioredoxin]-disulfide + L-methionine + H2O = L-methionine (S)-S-oxide + [thioredoxin]-dithiol. Has an important function as a repair enzyme for proteins that have been inactivated by oxidation. Catalyzes the reversible oxidation-reduction of methionine sulfoxide in proteins to methionine. In Streptococcus equi subsp. zooepidemicus (strain H70), this protein is Peptide methionine sulfoxide reductase MsrA.